The sequence spans 521 residues: Cytochrome P450 monooxygenase ARMGADRAFT_1018420 (521 aa).

A helical transmembrane segment spans residues 9 to 26; that stretch reads VSPIWILTAIVVVAYTTV. Residue Cys-443 coordinates heme. N-linked (GlcNAc...) asparagine glycosylation occurs at Asn-450.

The protein belongs to the cytochrome P450 family. Requires heme as cofactor.

The protein resides in the membrane. The protein operates within secondary metabolite biosynthesis. In terms of biological role, cytochrome P450 monooxygenase, part of the gene cluster that mediates the biosynthesis of melleolides, a range of antifungal and phytotoxic polyketide derivatives composed of an orsellinic acid (OA) moiety esterified to various sesquiterpene alcohols. The first step in melleolides biosynthesis is performed by the delta(6)-protoilludene synthase PRO1 which catalyzes the cyclization of farnesyl diphosphate to protoilludene. The orsellinic acid synthase armB produces OA by condensing acetyl-CoA with 3 malonyl-CoA units in a three-round chain elongation reaction folowed by a C2-C7 ring closure. ArmB further catalyzes the trans-esterification of OA to the various sesquiterpene alcohols resulting from the hydroxylation of protoilludene. The melleolides cluster also includes 5 cytochrome P450 monooxygenases, 4 NAD(+)-dependent oxidoreductases, one flavin-dependent oxidoreductase, and one O-methyltransferase. The cytochrome P450 monooxygenases may be involved in protoilludene hydroxylation to elaborate melleolides with multiple alcohol groups, such as melleolide D, which carries alcohol functionalities at C-4, C-5, C-10, and C-13. The role of the NAD(+)-dependent enzymes remains unknown. Numerous melleolides, including arnamial, show 5'-O-methylation of the aromatic moiety which may be catalyzed by the methyltransferase encoded in the cluster. The flavin-dependent oxidoreductase might represent the dehydrogenase yielding the aldehyde in position 1 of arnamial and other melleolides. Finally, several halogenase localized outside of the cluster, are able to catalyze the transfer of a single chlorine atom to the melleolide backbone, resulting in a 6'-chloromelleolide product. The polypeptide is Cytochrome P450 monooxygenase ARMGADRAFT_1018420 (Armillaria gallica (Bulbous honey fungus)).